Reading from the N-terminus, the 498-residue chain is Acetyl-coenzyme A carboxylase carboxyl transferase subunit beta, chloroplastic (498 aa).

Positions 36–59 (SVNEDPIINDMDKDIPSGSDSDNS) are disordered. Positions 231 to 498 (LWVQCENCYG…FFPLNQNSIK (268 aa)) constitute a CoA carboxyltransferase N-terminal domain. C235, C238, C254, and C257 together coordinate Zn(2+). The C4-type zinc finger occupies 235–257 (CENCYGLNYKRFLKSKMNICEHC).

Belongs to the AccD/PCCB family. Acetyl-CoA carboxylase is a heterohexamer composed of biotin carboxyl carrier protein, biotin carboxylase and 2 subunits each of ACCase subunit alpha and ACCase plastid-coded subunit beta (accD). Zn(2+) is required as a cofactor.

The protein localises to the plastid. Its subcellular location is the chloroplast stroma. It catalyses the reaction N(6)-carboxybiotinyl-L-lysyl-[protein] + acetyl-CoA = N(6)-biotinyl-L-lysyl-[protein] + malonyl-CoA. It functions in the pathway lipid metabolism; malonyl-CoA biosynthesis; malonyl-CoA from acetyl-CoA: step 1/1. Component of the acetyl coenzyme A carboxylase (ACC) complex. Biotin carboxylase (BC) catalyzes the carboxylation of biotin on its carrier protein (BCCP) and then the CO(2) group is transferred by the transcarboxylase to acetyl-CoA to form malonyl-CoA. The protein is Acetyl-coenzyme A carboxylase carboxyl transferase subunit beta, chloroplastic of Morus indica (Mulberry).